A 152-amino-acid chain; its full sequence is Nucleoside diphosphate kinase A (152 aa).

Residues lysine 12, phenylalanine 60, arginine 88, and threonine 94 each contribute to the ATP site. Residue lysine 100 forms a Glycyl lysine isopeptide (Lys-Gly) (interchain with G-Cter in ubiquitin) linkage. ATP is bound by residues arginine 105 and asparagine 115. The active-site Pros-phosphohistidine intermediate is histidine 118. 3 positions are modified to phosphoserine: serine 120, serine 122, and serine 125.

The protein belongs to the NDK family. In terms of assembly, hexamer of two different chains: An and B (A6, A5B, A4B2, A3B3, A2B4, AB5, B6). Interacts with PRUNE1. Component of the SET complex, composed of at least ANP32A, APEX1, HMGB2, NME1, SET and TREX1. Within this complex, interacts directly with SET. Also interacts with TREX1, but only following translocation to the nucleus. It depends on Mg(2+) as a cofactor.

It localises to the cytoplasm. It is found in the nucleus. It catalyses the reaction a 2'-deoxyribonucleoside 5'-diphosphate + ATP = a 2'-deoxyribonucleoside 5'-triphosphate + ADP. The enzyme catalyses a ribonucleoside 5'-diphosphate + ATP = a ribonucleoside 5'-triphosphate + ADP. Autophosphorylation at His-118 increases serine/threonine protein kinase activity of the enzyme. Interaction with the SET complex inhibits exonuclease activity. In terms of biological role, major role in the synthesis of nucleoside triphosphates other than ATP. The ATP gamma phosphate is transferred to the NDP beta phosphate via a ping-pong mechanism, using a phosphorylated active-site intermediate. Possesses nucleoside-diphosphate kinase, serine/threonine-specific protein kinase, geranyl and farnesyl pyrophosphate kinase, histidine protein kinase and 3'-5' exonuclease activities. Involved in cell proliferation, differentiation and development, signal transduction, G protein-coupled receptor endocytosis, and gene expression. Required for neural development including neural patterning and cell fate determination. During GZMA-mediated cell death, works in concert with TREX1. NME1 nicks one strand of DNA and TREX1 removes bases from the free 3' end to enhance DNA damage and prevent DNA end reannealing and rapid repair. This Rattus norvegicus (Rat) protein is Nucleoside diphosphate kinase A (Nme1).